The following is a 790-amino-acid chain: Lon protease 2 (790 aa).

Residues 18–210 (LRILPLRNMV…HVTFYMTRQL (193 aa)) enclose the Lon N-terminal domain. 362-369 (GPPGVGKT) serves as a coordination point for ATP. One can recognise a Lon proteolytic domain in the interval 598 to 779 (SWGCGIATGL…SDVLQLALLP (182 aa)). Catalysis depends on residues Ser685 and Lys728.

This sequence belongs to the peptidase S16 family. Homohexamer. Organized in a ring with a central cavity.

It is found in the cytoplasm. It catalyses the reaction Hydrolysis of proteins in presence of ATP.. Its function is as follows. ATP-dependent serine protease that mediates the selective degradation of mutant and abnormal proteins as well as certain short-lived regulatory proteins. Required for cellular homeostasis and for survival from DNA damage and developmental changes induced by stress. Degrades polypeptides processively to yield small peptide fragments that are 5 to 10 amino acids long. Binds to DNA in a double-stranded, site-specific manner. This chain is Lon protease 2, found in Syntrophobacter fumaroxidans (strain DSM 10017 / MPOB).